The chain runs to 312 residues: Fibrinogen-like protein 1 (312 aa).

Residues 1–22 (MAKVFSFILVTTALTMGREISA) form the signal peptide. Positions 23-61 (LEDCAQEQMRLRAQVRLLETRVKQQQVKIKQLLQENEVQ) form a coiled coil. Positions 74-306 (LGSKRQYADC…SVVMKIRPND (233 aa)) constitute a Fibrinogen C-terminal domain. Cystine bridges form between Cys83–Cys112 and Cys248–Cys261.

In terms of assembly, homodimer. Interacts (via the Fibrinogen C-terminal domain) with LAG3 (via Ig-like domains 1 and 2). Under normal conditions, liver-specific.

The protein resides in the secreted. Immune suppressive molecule that inhibits antigen-specific T-cell activation by acting as a major ligand of LAG3. Responsible for LAG3 T-cell inhibitory function. Binds LAG3 independently from MHC class II (MHC-II). Secreted by, and promotes growth of, hepatocytes. This chain is Fibrinogen-like protein 1, found in Homo sapiens (Human).